Here is a 425-residue protein sequence, read N- to C-terminus: D-tagatose 6-phosphate 4-epimerase (425 aa).

The protein belongs to the GatZ/KbaZ family.

It catalyses the reaction keto-D-tagatose 6-phosphate = keto-D-fructose 6-phosphate. It functions in the pathway carbohydrate metabolism. Its function is as follows. Involved in galactitol and D-altritol catabolism. Catalyzes the epimerization of D-tagatose 6-phosphate to D-fructose 6-phosphate. This is D-tagatose 6-phosphate 4-epimerase from Agrobacterium fabrum (strain C58 / ATCC 33970) (Agrobacterium tumefaciens (strain C58)).